A 163-amino-acid chain; its full sequence is Type-1 angiotensin II receptor-associated protein-like (163 aa).

At 1 to 28 (MELPAVNLKAIVFTHWLLTVFACMIDWL) the chain is on the extracellular side. Residues 29-49 (PKAYGLANITILAMGVWAIAQ) form a helical membrane-spanning segment. Residues 50-55 (RDSIDA) are Cytoplasmic-facing. A helical transmembrane segment spans residues 56 to 76 (IFMFLIGLLLTILTDILLFAL). The Extracellular segment spans residues 77 to 95 (YFTEAEKASESGPLRDLFR). A helical membrane pass occupies residues 96–116 (FSSGMGIFSLLLKPLSCFFMY). Residues 117–163 (HMYRERGGEYFVNLGFITLSRDRSSYQSIEHMDPPADQDNKLPSRTY) are Cytoplasmic-facing.

The protein resides in the membrane. Appears to be a negative regulator of angiotensin II type I receptor-mediated signaling. This is Type-1 angiotensin II receptor-associated protein-like (agtrap) from Xenopus tropicalis (Western clawed frog).